Consider the following 414-residue polypeptide: Transcriptional repressor protein YY1 (414 aa).

The interval 1–170 is interaction with the SMAD1/SMAD4 complex; the sequence is MASGDTLYIA…GGGSSSSGGG (170 aa). The disordered stretch occupies residues 33 to 81; it reads VETIETTVVGEEEEEDDDDEDGGGGDHGGGGGHGHAGHHHHHHHHHHHP. A compositionally biased stretch (acidic residues) spans 42–55; sequence GEEEEEDDDDEDGG. Over residues 57-66 the composition is skewed to gly residues; it reads GDHGGGGGHG. Residues 67 to 81 are compositionally biased toward basic residues; sequence HAGHHHHHHHHHHHP. Residues 116 to 260 form a gly-rich region involved in interaction with HCFC1 region; sequence DDSDGLRAED…YSEYMTGKKL (145 aa). Ser118 bears the Phosphoserine; by CK2 mark. Positions 157–203 are disordered; it reads GKSGGGGSSSSGGGRVKKGGGKKSGKKSYLSGGAGAAGGGGADPGNK. Gly residues predominate over residues 158–170; sequence KSGGGGSSSSGGG. The segment covering 171–182 has biased composition (basic residues); that stretch reads RVKKGGGKKSGK. Residues Lys182 and Lys183 each participate in a glycyl lysine isopeptide (Lys-Gly) (interchain with G-Cter in SUMO2) cross-link. The residue at position 187 (Ser187) is a Phosphoserine. Over residues 188–199 the composition is skewed to gly residues; sequence GGAGAAGGGGAD. Glycyl lysine isopeptide (Lys-Gly) (interchain with G-Cter in SUMO2) cross-links involve residues Lys208 and Lys230. Residue Ser247 is modified to Phosphoserine. Positions 257-341 are involved in nuclear matrix association; it reads GKKLPPGGIP…KAFVESSKLK (85 aa). Residues Lys286 and Lys288 each participate in a glycyl lysine isopeptide (Lys-Gly) (interchain with G-Cter in SUMO2) cross-link. The interval 295–414 is binding to DNA; sequence TIACPHKGCT…LTHAKAKNNQ (120 aa). 3 C2H2-type zinc fingers span residues 296-320, 325-347, and 353-377; these read IACP…LHTH, HVCA…QLVH, and FQCT…VRIH. 12 residues coordinate Zn(2+): Cys298, Cys303, His316, His320, Cys327, Cys330, His343, His347, Cys355, Cys360, His373, and His377. The tract at residues 333-371 is involved in repression of activated transcription; that stretch reads AFVESSKLKRHQLVHTGEKPFQCTFEGCGKRFSLDFNLR. Residues 371-397 are involved in masking transactivation domain; it reads RTHVRIHTGDRPYVCPFDGCNKKFAQS. Phosphothreonine is present on Thr378. The C2H2-type 4 zinc-finger motif lies at 383 to 407; that stretch reads YVCPFDGCNKKFAQSTNLKSHILTH. Zn(2+) is bound by residues Cys385, Cys390, His403, and His407. Residues Lys409 and Lys411 each participate in a glycyl lysine isopeptide (Lys-Gly) (interchain with G-Cter in SUMO2) cross-link.

Belongs to the YY transcription factor family. In terms of assembly, interacts with YAF2 through the region encompassing the first and second zinc fingers. Component of the chromatin remodeling INO80 complex; specifically part of a complex module associated with the DBINO domain of INO80. Interacts with EED and EZH2; the interactions are indicative for an association with the PRC2/EED-EZH2 complex. Interacts with SFMBT2. Found in a complex with SMAD1 and SMAD4. Found in a complex with YY1, SIN3A and HDAC1. Accessory component of the polycomb repressive deubiquitinase (PR-DUB) complex, at least composed of BAP1, one of ASXL1, ASXL2 or (probably) ASXL3 and one of MBD5 or MBD6; the PR-DUB core associates with a number of accessory proteins, including FOXK1, FOXK2, KDM1B, HCFC1, YY1 and OGT. Interacts (via Gly-rich region) with HCFC1; the interaction is direct. Interacts (via C-terminal zinc-finger domains) with BAP1 (via ULD domain); the interaction is direct and requires HCFC1. Post-translationally, phosphorylation at Ser-118 by CK2 prevents proteolytic cleavage by caspase-7 (CASP7) during apoptosis. In terms of processing, proteolytically cleaved by caspase-7 (CASP7) in response to apoptosis. Phosphorylation at Ser-118 protects against proteolytic cleavage. Transiently poly-ADP-ribosylated by PARP1 upon DNA damage, with the effect of decreasing affinity of YY1 to its cognate DNA binding sites. Post-translationally, ubiquitinated.

The protein resides in the nucleus matrix. Its function is as follows. Multifunctional transcription factor that exhibits positive and negative control on a large number of cellular and viral genes by binding to sites overlapping the transcription start site. Binds to the consensus sequence 5'-CCGCCATNTT-3'; some genes have been shown to contain a longer binding motif allowing enhanced binding; the initial CG dinucleotide can be methylated greatly reducing the binding affinity. The effect on transcription regulation is depending upon the context in which it binds and diverse mechanisms of action include direct activation or repression, indirect activation or repression via cofactor recruitment, or activation or repression by disruption of binding sites or conformational DNA changes. Its activity is regulated by transcription factors and cytoplasmic proteins that have been shown to abrogate or completely inhibit YY1-mediated activation or repression. For example, it acts as a repressor in absence of adenovirus E1A protein but as an activator in its presence. Acts synergistically with the SMAD1 and SMAD4 in bone morphogenetic protein (BMP)-mediated cardiac-specific gene expression. Binds to SMAD binding elements (SBEs) (5'-GTCT/AGAC-3') within BMP response element (BMPRE) of cardiac activating regions. May play an important role in development and differentiation. Proposed to recruit the PRC2/EED-EZH2 complex to target genes that are transcriptional repressed. Involved in DNA repair. In vitro, binds to DNA recombination intermediate structures (Holliday junctions). Plays a role in regulating enhancer activation. Recruits the PR-DUB complex to specific gene-regulatory regions. Functionally, proposed core component of the chromatin remodeling INO80 complex which is involved in transcriptional regulation, DNA replication and probably DNA repair; proposed to target the INO80 complex to YY1-responsive elements. The chain is Transcriptional repressor protein YY1 (YY1) from Homo sapiens (Human).